We begin with the raw amino-acid sequence, 201 residues long: Elongation factor Ts (201 aa).

Positions 81–84 (TDFV) are involved in Mg(2+) ion dislocation from EF-Tu.

This sequence belongs to the EF-Ts family.

Its subcellular location is the cytoplasm. Its function is as follows. Associates with the EF-Tu.GDP complex and induces the exchange of GDP to GTP. It remains bound to the aminoacyl-tRNA.EF-Tu.GTP complex up to the GTP hydrolysis stage on the ribosome. This chain is Elongation factor Ts, found in Syntrophus aciditrophicus (strain SB).